Here is an 86-residue protein sequence, read N- to C-terminus: Large ribosomal subunit protein bL31 (86 aa).

Residues 66–86 (GMGSANSATSKEQKADKDSQK) form a disordered region. The segment covering 76 to 86 (KEQKADKDSQK) has biased composition (basic and acidic residues).

The protein belongs to the bacterial ribosomal protein bL31 family. Type A subfamily. In terms of assembly, part of the 50S ribosomal subunit.

Its function is as follows. Binds the 23S rRNA. In Prochlorococcus marinus (strain MIT 9215), this protein is Large ribosomal subunit protein bL31.